A 438-amino-acid chain; its full sequence is Adenosylhomocysteinase (438 aa).

Substrate-binding residues include threonine 61, aspartate 137, and glutamate 162. 163–165 (TTT) is a binding site for NAD(+). Substrate contacts are provided by lysine 192 and aspartate 196. NAD(+)-binding positions include asparagine 197, 226–231 (GYGDVG), glutamate 249, asparagine 284, 305–307 (IGH), and asparagine 352.

Belongs to the adenosylhomocysteinase family. Requires NAD(+) as cofactor.

It is found in the cytoplasm. It catalyses the reaction S-adenosyl-L-homocysteine + H2O = L-homocysteine + adenosine. It functions in the pathway amino-acid biosynthesis; L-homocysteine biosynthesis; L-homocysteine from S-adenosyl-L-homocysteine: step 1/1. Functionally, may play a key role in the regulation of the intracellular concentration of adenosylhomocysteine. The sequence is that of Adenosylhomocysteinase from Flavobacterium psychrophilum (strain ATCC 49511 / DSM 21280 / CIP 103535 / JIP02/86).